We begin with the raw amino-acid sequence, 619 residues long: Kininogen-2 (619 aa).

A signal peptide spans 1 to 18; that stretch reads MKLITILFLCSRLLPSLT. Pyrrolidone carboxylic acid is present on glutamine 19. The Cystatin kininogen-type 1 domain occupies 27-131; the sequence is CNDQDVFKAV…IQTCLITPAE (105 aa). 9 disulfides stabilise this stretch: cysteine 27-cysteine 589, cysteine 82-cysteine 93, cysteine 106-cysteine 125, cysteine 141-cysteine 144, cysteine 205-cysteine 217, cysteine 228-cysteine 247, cysteine 261-cysteine 264, cysteine 325-cysteine 337, and cysteine 348-cysteine 367. The N-linked (GlcNAc...) asparagine glycan is linked to asparagine 87. Residue threonine 136 is glycosylated (O-linked (GalNAc...) threonine; partial). The 104-residue stretch at 150-253 folds into the Cystatin kininogen-type 2 domain; that stretch reads TKSPDLEPVL…SQKCDLYPGE (104 aa). Asparagine 168 and asparagine 169 each carry an N-linked (GlcNAc...) asparagine glycan. An N-linked (GlcNAc...) asparagine; partial glycan is attached at asparagine 197. A glycan (N-linked (GlcNAc...) asparagine) is linked at asparagine 204. Residues 270–373 form the Cystatin kininogen-type 3 domain; sequence VDSPDLEEAL…TVNCQPLGQT (104 aa). A glycan (N-linked (GlcNAc...) asparagine) is linked at asparagine 280. The residue at position 380 (proline 380) is a 4-hydroxyproline. A disordered region spans residues 394-495; sequence EGSTTVSLPH…GKNNGKHYDW (102 aa). O-linked (GalNAc...) serine glycosylation is present at serine 396. O-linked (GalNAc...) threonine glycosylation is found at threonine 397 and threonine 398. Residues serine 400 and serine 404 are each glycosylated (O-linked (GalNAc...) serine). Basic residues predominate over residues 442–490; that stretch reads GHKHKHDQGHGHHRSHGLGHGHQKQHGLGHGHKHGHGHGKHKNKGKNNG. Serine 510 carries an O-linked (GalNAc...) serine glycan. Residues threonine 518, threonine 522, threonine 534, threonine 546, threonine 551, and threonine 568 are each glycosylated (O-linked (GalNAc...) threonine).

In terms of processing, bradykinin is released from kininogen by plasma kallikrein. As to expression, plasma.

The protein localises to the secreted. It is found in the extracellular space. Its function is as follows. (1) Kininogens are inhibitors of thiol proteases; (2) HMW-kininogen plays an important role in blood coagulation by helping to position optimally prekallikrein and factor XI next to factor XII; (3) HMW-kininogen inhibits the thrombin- and plasmin-induced aggregation of thrombocytes; (4) the active peptide bradykinin that is released from HMW-kininogen shows a variety of physiological effects: (4A) influence in smooth muscle contraction, (4B) induction of hypotension, (4C) natriuresis and diuresis, (4D) decrease in blood glucose level, (4E) it is a mediator of inflammation and causes (4E1) increase in vascular permeability, (4E2) stimulation of nociceptors (4E3) release of other mediators of inflammation (e.g. prostaglandins), (4F) it has a cardioprotective effect (directly via bradykinin action, indirectly via endothelium-derived relaxing factor action); (5) LMW-kininogen inhibits the aggregation of thrombocytes; (6) LMW-kininogen is in contrast to HMW-kininogen not involved in blood clotting. This is Kininogen-2 (KNG2) from Bos taurus (Bovine).